Reading from the N-terminus, the 195-residue chain is Pyridoxal 5'-phosphate synthase subunit PdxT (195 aa).

Glycine 46–serine 48 contacts L-glutamine. The Nucleophile role is filled by cysteine 78. Residues arginine 105 and isoleucine 133–arginine 134 contribute to the L-glutamine site. Catalysis depends on charge relay system residues histidine 169 and glutamate 171.

The protein belongs to the glutaminase PdxT/SNO family. In terms of assembly, in the presence of PdxS, forms a dodecamer of heterodimers. Only shows activity in the heterodimer.

The catalysed reaction is aldehydo-D-ribose 5-phosphate + D-glyceraldehyde 3-phosphate + L-glutamine = pyridoxal 5'-phosphate + L-glutamate + phosphate + 3 H2O + H(+). It catalyses the reaction L-glutamine + H2O = L-glutamate + NH4(+). It participates in cofactor biosynthesis; pyridoxal 5'-phosphate biosynthesis. In terms of biological role, catalyzes the hydrolysis of glutamine to glutamate and ammonia as part of the biosynthesis of pyridoxal 5'-phosphate. The resulting ammonia molecule is channeled to the active site of PdxS. This chain is Pyridoxal 5'-phosphate synthase subunit PdxT, found in Shouchella clausii (strain KSM-K16) (Alkalihalobacillus clausii).